A 411-amino-acid polypeptide reads, in one-letter code: Tyrosine--tRNA ligase (411 aa).

Position 34 (tyrosine 34) interacts with L-tyrosine. Positions 39 to 48 (CTATSLHIGS) match the 'HIGH' region motif. 2 residues coordinate L-tyrosine: tyrosine 171 and glutamine 175. The short motif at 231–235 (KMGKT) is the 'KMSKS' region element. Lysine 234 provides a ligand contact to ATP. An S4 RNA-binding domain is found at 345 to 411 (ISAYELFHEA…GKKRHILVRV (67 aa)).

Belongs to the class-I aminoacyl-tRNA synthetase family. TyrS type 1 subfamily. In terms of assembly, homodimer.

Its subcellular location is the cytoplasm. It carries out the reaction tRNA(Tyr) + L-tyrosine + ATP = L-tyrosyl-tRNA(Tyr) + AMP + diphosphate + H(+). Catalyzes the attachment of tyrosine to tRNA(Tyr) in a two-step reaction: tyrosine is first activated by ATP to form Tyr-AMP and then transferred to the acceptor end of tRNA(Tyr). The chain is Tyrosine--tRNA ligase from Rickettsia felis (strain ATCC VR-1525 / URRWXCal2) (Rickettsia azadi).